We begin with the raw amino-acid sequence, 1550 residues long: Cellulose synthase 1 (1550 aa).

Residues 1–741 are catalytic; it reads MPEVRSSTQS…KERVLKGTVK (741 aa). The next 3 membrane-spanning stretches (helical) occupy residues 26–46, 47–67, and 106–126; these read GAGLIIGVFGLCALIAATSVT, LPPEQQLIVAFVCVVIFFIVG, and GLLGTMLLVAELYALMMLFLS. Residues 147–240 are catalytic subdomain A; sequence EWPTVDIFVP…YILIFDCDHV (94 aa). D189 is an active-site residue. Substrate is bound by residues D236 and D238. Residues 317–377 form a catalytic subdomain B region; it reads TAIEQIGGFA…GQRVRWARGM (61 aa). D333 is a catalytic residue. A run of 5 helical transmembrane segments spans residues 398–418, 423–443, 468–488, 507–527, and 547–567; these read LCYLSAMTSFLFAVPRVIFLS, FLFFGQNIIAASPLALLAYAI, VYETTMALFLVRVTIVTLLSP, FDLGAVYPNIILGLIMFGGLA, and LLNSAWAMLSLIIILAAIAVG. In terms of domain architecture, PilZ spans 572-647; that stretch reads QKRNSHRIPA…PARIIRAGNG (76 aa). Disordered stretches follow at residues 708 to 731 and 768 to 813; these read VHRSSPTKPSAGNALSDDTNNPSR and APAH…QPLA. Positions 742–1550 are cyclic di-GMP binding domain; that stretch reads MVSLLALLTF…KQLEDERRKS (809 aa). A compositionally biased stretch (low complexity) spans 768–796; sequence APAHQPEASDLPPLPALLPATSGAAQAGS. A helical membrane pass occupies residues 1513-1533; the sequence is VLLVGLLGCILIVSVLARALA.

In the N-terminal section; belongs to the glycosyltransferase 2 family. This sequence in the C-terminal section; belongs to the AcsB/BcsB family. The cofactor is Mg(2+).

Its subcellular location is the cell inner membrane. It catalyses the reaction [(1-&gt;4)-beta-D-glucosyl](n) + UDP-alpha-D-glucose = [(1-&gt;4)-beta-D-glucosyl](n+1) + UDP + H(+). It functions in the pathway glycan metabolism; bacterial cellulose biosynthesis. In terms of biological role, bifunctional protein comprised of a catalytic subunit and a regulatory subunit. The catalytic subunit of cellulose synthase polymerizes uridine 5'-diphosphate glucose to cellulose in a processive way. The thick cellulosic mats generated by this enzyme probably provide a specialized protective environment to the bacterium. The regulatory subunit binds bis-(3'-5') cyclic diguanylic acid (c-di-GMP). This is Cellulose synthase 1 (acsAB) from Novacetimonas hansenii (Komagataeibacter hansenii).